We begin with the raw amino-acid sequence, 442 residues long: Tubulin beta chain (442 aa).

GTP is bound by residues glutamine 11, glutamate 69, serine 138, glycine 142, threonine 143, glycine 144, asparagine 204, and asparagine 226. Glutamate 69 contributes to the Mg(2+) binding site. The tract at residues 421–442 (EYQQYQDATAEDEEEMDEEQME) is disordered. The segment covering 429–442 (TAEDEEEMDEEQME) has biased composition (acidic residues).

Belongs to the tubulin family. As to quaternary structure, dimer of alpha and beta chains. A typical microtubule is a hollow water-filled tube with an outer diameter of 25 nm and an inner diameter of 15 nM. Alpha-beta heterodimers associate head-to-tail to form protofilaments running lengthwise along the microtubule wall with the beta-tubulin subunit facing the microtubule plus end conferring a structural polarity. Microtubules usually have 13 protofilaments but different protofilament numbers can be found in some organisms and specialized cells. Mg(2+) is required as a cofactor.

It is found in the cytoplasm. The protein localises to the cytoskeleton. Tubulin is the major constituent of microtubules, a cylinder consisting of laterally associated linear protofilaments composed of alpha- and beta-tubulin heterodimers. Microtubules grow by the addition of GTP-tubulin dimers to the microtubule end, where a stabilizing cap forms. Below the cap, tubulin dimers are in GDP-bound state, owing to GTPase activity of alpha-tubulin. In Stylonychia lemnae (Ciliate), this protein is Tubulin beta chain (TUBB1).